Here is a 154-residue protein sequence, read N- to C-terminus: Jupiter microtubule associated homolog 1 (154 aa).

M1 bears the N-acetylmethionine mark. Over residues 1–19 (MTTTTTFKGVDPNSRNSSR) the composition is skewed to polar residues. A disordered region spans residues 1 to 154 (MTTTTTFKGV…PGGKSSLVLG (154 aa)). T2 bears the N-acetylthreonine; in Hematological and neurological expressed 1 protein, N-terminally processed mark. S28 and S31 each carry phosphoserine. T54 is subject to Phosphothreonine. A phosphoserine mark is found at S71, S87, S88, and S92. Residues 79-91 (SPGTQRSNSSEAS) are compositionally biased toward polar residues. Positions 96-108 (LDLKGEGDMHENV) are enriched in basic and acidic residues. The span at 125 to 138 (PAAPVPSPVAPAPV) shows a compositional bias: pro residues. At S131 the chain carries Phosphoserine. At K148 the chain carries N6-acetyllysine.

The protein belongs to the JUPITER family. In terms of assembly, interacts with the complex composed, at least, of APC, CTNNB1 and GSK3B; the interaction takes place with the inactive form of GSK3B (phosphorylated at 'Ser-9'). As to expression, expressed in yolk sac, fetal brain, brain, spleen and bone marrow.

Its subcellular location is the nucleus. The protein localises to the cytoplasm. Functionally, modulates negatively AKT-mediated GSK3B signaling. Induces CTNNB1 'Ser-33' phosphorylation and degradation through the suppression of the inhibitory 'Ser-9' phosphorylation of GSK3B, which represses the function of the APC:CTNNB1:GSK3B complex and the interaction with CDH1/E-cadherin in adherent junctions. Plays a role in the regulation of cell cycle and cell adhesion. Has an inhibitory role on AR-signaling pathway through the induction of receptor proteasomal degradation. The sequence is that of Jupiter microtubule associated homolog 1 from Mus musculus (Mouse).